A 281-amino-acid polypeptide reads, in one-letter code: Imidazoleglycerol-phosphate dehydratase, chloroplastic (281 aa).

A chloroplast-targeting transit peptide spans 1–85; it reads MELYAASHSL…TSLPFHPETR (85 aa). Residues Glu-95, 121–129, 147–151, Arg-173, and Arg-195 each bind substrate; these read HMLDQLASH and HHTNE. The Mn(2+) site is built by His-121, His-147, His-148, and Glu-151. Mn(2+) contacts are provided by His-219, His-243, His-244, and Glu-247. Residues 243–251 and 273–275 each bind substrate; these read HHIIEATFK and SSK.

This sequence belongs to the imidazoleglycerol-phosphate dehydratase family. It depends on Mn(2+) as a cofactor.

It is found in the plastid. The protein localises to the chloroplast. The enzyme catalyses D-erythro-1-(imidazol-4-yl)glycerol 3-phosphate = 3-(imidazol-4-yl)-2-oxopropyl phosphate + H2O. The protein operates within amino-acid biosynthesis; L-histidine biosynthesis; L-histidine from 5-phospho-alpha-D-ribose 1-diphosphate: step 6/9. This Pisum sativum (Garden pea) protein is Imidazoleglycerol-phosphate dehydratase, chloroplastic.